We begin with the raw amino-acid sequence, 293 residues long: Aspartate carbamoyltransferase catalytic subunit (293 aa).

Carbamoyl phosphate is bound by residues arginine 50 and threonine 51. Lysine 78 is a binding site for L-aspartate. Carbamoyl phosphate-binding residues include arginine 100, histidine 127, and glutamine 130. L-aspartate contacts are provided by arginine 160 and arginine 210. 2 residues coordinate carbamoyl phosphate: alanine 253 and proline 254.

Belongs to the aspartate/ornithine carbamoyltransferase superfamily. ATCase family. As to quaternary structure, heterododecamer (2C3:3R2) of six catalytic PyrB chains organized as two trimers (C3), and six regulatory PyrI chains organized as three dimers (R2).

It carries out the reaction carbamoyl phosphate + L-aspartate = N-carbamoyl-L-aspartate + phosphate + H(+). Its pathway is pyrimidine metabolism; UMP biosynthesis via de novo pathway; (S)-dihydroorotate from bicarbonate: step 2/3. In terms of biological role, catalyzes the condensation of carbamoyl phosphate and aspartate to form carbamoyl aspartate and inorganic phosphate, the committed step in the de novo pyrimidine nucleotide biosynthesis pathway. The protein is Aspartate carbamoyltransferase catalytic subunit of Staphylococcus epidermidis (strain ATCC 12228 / FDA PCI 1200).